The chain runs to 66 residues: Omega conotoxin-CVIE (66 aa).

The N-terminal stretch at 1 to 17 (VVIVAVLLLTACQLITA) is a signal peptide. The propeptide occupies 18-40 (NDSRGTQKHRALRSDTKLSMSTR). Intrachain disulfides connect Cys41–Cys56, Cys48–Cys60, and Cys55–Cys65. Cys65 carries the cysteine amide modification.

The protein belongs to the conotoxin O1 superfamily. As to expression, expressed by the venom duct.

It is found in the secreted. Its function is as follows. Omega-conotoxins act at presynaptic membranes, they bind and block voltage-gated calcium channels. This toxin blocks N-type calcium channels (Cav2.2/CACNA1B). It shows a higher potency when Cav2.2/CACNA1B is only expressed with the ancillary subunit CACNB3 (IC(50)=0.12 nM) than on Cav2.2/CACNA1B expressed with the ancillary subunits CACNA2D1 and CACNB3 (IC(50)=2.6 nM). The Cav2.2/CACNA1B block by this toxin is voltage-independent, whereas the recovery from toxin block is voltage-dependent. There is a low recovery at physiological membrane potential and a high recovery with hyperpolarized potential. This indicates that the toxin has a higher affinity for Cav2.2/CACNA1B in the inactivated state. It is noteworthy that ancillary subunits beta modulate recovery from this toxin block. Cav2.2/CACNA1B expressed with the ancillary subunit CACNB2a (isoform 2a) almost recover completely from this toxin block, whereas Cav2.2/CACNA1B expressed with CACNB3 exhibits relatively weak recovery. Inhibition by this toxin of excitatory synaptic transmission is reversible. In vivo, when tested on rat model of persistent pain, this toxin blocks chronic pain behavior. This Conus catus (Cat cone) protein is Omega conotoxin-CVIE.